The following is a 201-amino-acid chain: Ubiquitin-conjugating enzyme E2 E2 (201 aa).

Residues 1 to 10 (MSTEAQRVDD) show a composition bias toward basic and acidic residues. A disordered region spans residues 1-55 (MSTEAQRVDDSPSTSGGSSDGDQRESVQQEPDREQVQPKKKEGKISSKTAAKLST). S2 carries the N-acetylserine modification. Residues S11, S15, S18, and S19 each carry the phosphoserine modification. Residues 21 to 45 (GDQRESVQQEPDREQVQPKKKEGKI) show a composition bias toward basic and acidic residues. The segment covering 46–55 (SSKTAAKLST) has biased composition (low complexity). The 147-residue stretch at 55 to 201 (TSAKRIQKEL…ARQWTKRYAT (147 aa)) folds into the UBC core domain. Residue C139 is the Glycyl thioester intermediate of the active site.

Belongs to the ubiquitin-conjugating enzyme family. In terms of processing, autoubiquitinated.

It catalyses the reaction S-ubiquitinyl-[E1 ubiquitin-activating enzyme]-L-cysteine + [E2 ubiquitin-conjugating enzyme]-L-cysteine = [E1 ubiquitin-activating enzyme]-L-cysteine + S-ubiquitinyl-[E2 ubiquitin-conjugating enzyme]-L-cysteine.. It functions in the pathway protein modification; protein ubiquitination. Its function is as follows. Accepts ubiquitin from the E1 complex and catalyzes its covalent attachment to other proteins. In vitro catalyzes 'Lys-11'- and 'Lys-48'-, as well as 'Lys-63'-linked polyubiquitination. Catalyzes the ISGylation of influenza A virus NS1 protein. The protein is Ubiquitin-conjugating enzyme E2 E2 (Ube2e2) of Mus musculus (Mouse).